The following is a 787-amino-acid chain: Probable basic-leucine zipper transcription factor J (787 aa).

Residues 18 to 90 (NSNIHNNTHN…NNTQNTNNGT (73 aa)) are compositionally biased toward low complexity. 6 disordered regions span residues 18 to 95 (NSNI…LTPL), 153 to 173 (LNLS…NNNP), 186 to 306 (LQSQ…NNNT), 343 to 372 (DSLL…IQTS), 401 to 441 (LSSA…NNSN), and 473 to 507 (ASSE…DEDQ). 4 stretches are compositionally biased toward low complexity: residues 186 to 223 (LQSQ…SSPI), 235 to 258 (SSPI…STSP), 273 to 305 (NNNN…LNNN), and 351 to 366 (NNNN…NNNN). Residues 473-483 (ASSESAQSESS) show a composition bias toward low complexity. Residues 549 to 612 (ELKKQRRLVK…KALKKQLYSL (64 aa)) form the bZIP domain. Positions 551 to 603 (KKQRRLVKNREYASQSRSRRKIYVENIETKLQKTNQDCASIKSQLNSVKEENK) are basic motif. Residues 605 to 612 (LKKQLYSL) form a leucine-zipper region. Disordered regions lie at residues 723–747 (SNYI…VVST) and 763–787 (DKEV…SPLN). The span at 763–778 (DKEVPQKCKDSSDLKC) shows a compositional bias: basic and acidic residues.

It belongs to the bZIP family.

It localises to the nucleus. Probable transcriptional regulator. In Dictyostelium discoideum (Social amoeba), this protein is Probable basic-leucine zipper transcription factor J (bzpJ).